The sequence spans 132 residues: Small ribosomal subunit protein uS8 (132 aa).

This sequence belongs to the universal ribosomal protein uS8 family. As to quaternary structure, part of the 30S ribosomal subunit. Contacts proteins S5 and S12.

One of the primary rRNA binding proteins, it binds directly to 16S rRNA central domain where it helps coordinate assembly of the platform of the 30S subunit. This is Small ribosomal subunit protein uS8 from Brucella abortus (strain S19).